Reading from the N-terminus, the 421-residue chain is Diaminopimelate decarboxylase (421 aa).

Position 63 is an N6-(pyridoxal phosphate)lysine (K63). Pyridoxal 5'-phosphate is bound by residues G242 and 278–281; that span reads EPGR. Residues R281, R317, and Y321 each contribute to the substrate site. The active-site Proton donor is the C346. Substrate-binding residues include E347 and Y375. Y375 is a pyridoxal 5'-phosphate binding site.

The protein belongs to the Orn/Lys/Arg decarboxylase class-II family. LysA subfamily. As to quaternary structure, homodimer. Pyridoxal 5'-phosphate serves as cofactor.

It carries out the reaction meso-2,6-diaminopimelate + H(+) = L-lysine + CO2. Its pathway is amino-acid biosynthesis; L-lysine biosynthesis via DAP pathway; L-lysine from DL-2,6-diaminopimelate: step 1/1. In terms of biological role, specifically catalyzes the decarboxylation of meso-diaminopimelate (meso-DAP) to L-lysine. In Zymomonas mobilis subsp. mobilis (strain ATCC 31821 / ZM4 / CP4), this protein is Diaminopimelate decarboxylase.